We begin with the raw amino-acid sequence, 72 residues long: Disintegrin cereberin (72 aa).

The 72-residue stretch at 1-72 (EAGEECDCGS…SADCPRNRFH (72 aa)) folds into the Disintegrin domain. Cystine bridges form between cysteine 6/cysteine 21, cysteine 8/cysteine 16, cysteine 15/cysteine 38, cysteine 29/cysteine 35, cysteine 34/cysteine 59, and cysteine 47/cysteine 66. Positions 51–53 (RGD) match the Cell attachment site motif. The interval 51 to 72 (RGDNPDDRCTGQSADCPRNRFH) is disordered.

This sequence belongs to the venom metalloproteinase (M12B) family. P-II subfamily. P-IIa sub-subfamily. As to quaternary structure, monomer (disintegrin). Expressed by the venom gland.

The protein localises to the secreted. In terms of biological role, inhibits fibrinogen interaction with platelet. Acts by binding to alpha-IIb/beta-3 (ITGA2B/ITGB3) on the platelet surface and inhibits aggregation induced by ADP, thrombin, platelet-activating factor and collagen. This is Disintegrin cereberin from Crotalus cerberus (Arizona black rattlesnake).